Reading from the N-terminus, the 256-residue chain is MTDVARILKEARDQGRMTALDYASLIFDEFMELHGDRQFADDGSIVGGIAYLADQPVTVIGIQKGKNLQDNLARNFGQPHPEGYRKALRLMKQAEKFGRPVITFINTAGAYPGVGAEERGQGEAIARNLMEMSDLKVPIIAIIIGEGGSGGALALAVADQVWMLENTMYAVLSPEGFASILWKDGSRATEAAELMKITAAELYQMGVIDRIIPERGYFSSEIIEMIRSHLIDEITQLQAKSLEELLDQRYQRFRKY.

One can recognise a CoA carboxyltransferase C-terminal domain in the interval 1 to 236 (MTDVARILKE…RSHLIDEITQ (236 aa)).

Belongs to the AccA family. In terms of assembly, acetyl-CoA carboxylase is a heterohexamer composed of biotin carboxyl carrier protein (AccB), biotin carboxylase (AccC) and two subunits each of ACCase subunit alpha (AccA) and ACCase subunit beta (AccD).

The protein localises to the cytoplasm. It catalyses the reaction N(6)-carboxybiotinyl-L-lysyl-[protein] + acetyl-CoA = N(6)-biotinyl-L-lysyl-[protein] + malonyl-CoA. It functions in the pathway lipid metabolism; malonyl-CoA biosynthesis; malonyl-CoA from acetyl-CoA: step 1/1. Functionally, component of the acetyl coenzyme A carboxylase (ACC) complex. First, biotin carboxylase catalyzes the carboxylation of biotin on its carrier protein (BCCP) and then the CO(2) group is transferred by the carboxyltransferase to acetyl-CoA to form malonyl-CoA. The polypeptide is Acetyl-coenzyme A carboxylase carboxyl transferase subunit alpha (Streptococcus equi subsp. zooepidemicus (strain MGCS10565)).